Reading from the N-terminus, the 172-residue chain is Small ribosomal subunit protein uS5c (172 aa).

One can recognise an S5 DRBM domain in the interval 15 to 78 (WEEKVVQVKR…TDAKKHIINV (64 aa)).

The protein belongs to the universal ribosomal protein uS5 family. As to quaternary structure, part of the 30S ribosomal subunit. Contacts protein S4.

The protein localises to the plastid. It is found in the chloroplast. Its function is as follows. With S4 and S12 plays an important role in translational accuracy. The protein is Small ribosomal subunit protein uS5c (rps5) of Gracilaria tenuistipitata var. liui (Red alga).